A 509-amino-acid chain; its full sequence is L-arabinose isomerase (509 aa).

4 residues coordinate Mn(2+): glutamate 313, glutamate 340, histidine 357, and histidine 456.

The protein belongs to the arabinose isomerase family. Mn(2+) serves as cofactor.

It carries out the reaction beta-L-arabinopyranose = L-ribulose. Its pathway is carbohydrate degradation; L-arabinose degradation via L-ribulose; D-xylulose 5-phosphate from L-arabinose (bacterial route): step 1/3. In terms of biological role, catalyzes the conversion of L-arabinose to L-ribulose. This is L-arabinose isomerase from Phocaeicola vulgatus (strain ATCC 8482 / DSM 1447 / JCM 5826 / CCUG 4940 / NBRC 14291 / NCTC 11154) (Bacteroides vulgatus).